The sequence spans 275 residues: Large ribosomal subunit protein uL2 (275 aa).

The interval 222-275 (GVAMNPVDHPMGGGEGRSSGGRHPCSPWGMPTKGYKTRKNKTTDKFIVRKRNKR) is disordered.

The protein belongs to the universal ribosomal protein uL2 family. Part of the 50S ribosomal subunit. Forms a bridge to the 30S subunit in the 70S ribosome.

In terms of biological role, one of the primary rRNA binding proteins. Required for association of the 30S and 50S subunits to form the 70S ribosome, for tRNA binding and peptide bond formation. It has been suggested to have peptidyltransferase activity; this is somewhat controversial. Makes several contacts with the 16S rRNA in the 70S ribosome. In Desulfatibacillum aliphaticivorans, this protein is Large ribosomal subunit protein uL2.